Reading from the N-terminus, the 1516-residue chain is Alpha-2-macroglobulin homolog (1516 aa).

An N-terminal signal peptide occupies residues 1-26 (MSNLRRFSRSLAVAALVLLPFAAVQA).

It belongs to the protease inhibitor I39 (alpha-2-macroglobulin) family. Bacterial alpha-2-macroglobulin subfamily.

The protein is Alpha-2-macroglobulin homolog of Pseudomonas aeruginosa (strain ATCC 15692 / DSM 22644 / CIP 104116 / JCM 14847 / LMG 12228 / 1C / PRS 101 / PAO1).